A 142-amino-acid chain; its full sequence is Hemoglobin subunit alpha-1 (142 aa).

At Ser1 the chain carries N-acetylserine. Positions Ser1–Arg142 constitute a Globin domain. His59 lines the O2 pocket. His88 lines the heme b pocket.

It belongs to the globin family. As to quaternary structure, hb1 is a heterotetramer of two alpha-2 chains and two beta chains. Red blood cells.

Its function is as follows. Involved in oxygen transport from gills to the various peripheral tissues. The polypeptide is Hemoglobin subunit alpha-1 (hba1) (Notothenia neglecta (Yellowbelly rockcod)).